The sequence spans 140 residues: uncharacterized protein (140 aa).

The first 22 residues, 1-22, serve as a signal peptide directing secretion; sequence MRLRWQTIVLLLLILGGASASA.

This is an uncharacterized protein from Archaeoglobus fulgidus (strain ATCC 49558 / DSM 4304 / JCM 9628 / NBRC 100126 / VC-16).